Here is a 194-residue protein sequence, read N- to C-terminus: Granulocyte colony-stimulating factor (194 aa).

An N-terminal signal peptide occupies residues lysine 1–alanine 20. 2 disulfide bridges follow: cysteine 56–cysteine 62 and cysteine 84–cysteine 94. Threonine 153 carries an O-linked (GalNAc...) threonine glycan.

Belongs to the IL-6 superfamily. Monomer. In terms of processing, O-glycosylated.

It is found in the secreted. Its function is as follows. Granulocyte/macrophage colony-stimulating factors are cytokines that act in hematopoiesis by controlling the production, differentiation, and function of 2 related white cell populations of the blood, the granulocytes and the monocytes-macrophages. This CSF induces granulocytes. The protein is Granulocyte colony-stimulating factor (CSF3) of Felis catus (Cat).